Consider the following 332-residue polypeptide: MQTNLLKPKTINVEQLGHNRAKVVLEPFERGYGHTLGNALRRVLLSSMVGYAATEVTIAGVLHEYSSIDGVQEDVVNILLNLKGVVFKLHNRDEVTLSLRKDGEGVVTARDIQTPHDVEIINPDHVIANLSQGGKLDMQIKVEKGRGYVPGNVRRYGDESTKSIGRIVLDASFSPVKRVSYAVESARVEQRTDLDKLVVEIETNGAITAEDAVRASAKILVEQLAVFAQLDGGDIASVFDAPAGGRGAATAFDPILLRPVDELELTVRSANCLKAENIYYIGDLIQRTENELLKTPNLGRKSLNEIKEVLASRGLTLGMKLENWPPAGLEKR.

Residues 1–231 (MQTNLLKPKT…EQLAVFAQLD (231 aa)) are alpha N-terminal domain (alpha-NTD). Residues 252–332 (FDPILLRPVD…NWPPAGLEKR (81 aa)) form an alpha C-terminal domain (alpha-CTD) region.

It belongs to the RNA polymerase alpha chain family. In terms of assembly, homodimer. The RNAP catalytic core consists of 2 alpha, 1 beta, 1 beta' and 1 omega subunit. When a sigma factor is associated with the core the holoenzyme is formed, which can initiate transcription.

The catalysed reaction is RNA(n) + a ribonucleoside 5'-triphosphate = RNA(n+1) + diphosphate. In terms of biological role, DNA-dependent RNA polymerase catalyzes the transcription of DNA into RNA using the four ribonucleoside triphosphates as substrates. This Delftia acidovorans (strain DSM 14801 / SPH-1) protein is DNA-directed RNA polymerase subunit alpha.